The chain runs to 152 residues: Large ribosomal subunit protein uL13 (152 aa).

It belongs to the universal ribosomal protein uL13 family. As to quaternary structure, part of the 50S ribosomal subunit.

Functionally, this protein is one of the early assembly proteins of the 50S ribosomal subunit, although it is not seen to bind rRNA by itself. It is important during the early stages of 50S assembly. This is Large ribosomal subunit protein uL13 from Borreliella afzelii (strain PKo) (Borrelia afzelii).